Here is a 69-residue protein sequence, read N- to C-terminus: Mitotic-spindle organizing protein 1 (69 aa).

It belongs to the MOZART1 family. As to quaternary structure, part of the gamma-tubulin complex.

It localises to the cytoplasm. It is found in the cytoskeleton. The protein resides in the microtubule organizing center. Its subcellular location is the spindle. In terms of biological role, required for gamma-tubulin complex recruitment to the microtubule organizing centers (MTOCs). The protein is Mitotic-spindle organizing protein 1 of Picea sitchensis (Sitka spruce).